Consider the following 471-residue polypeptide: Cysteine--tRNA ligase (471 aa).

Position 29 (cysteine 29) interacts with Zn(2+). The short motif at 31 to 41 (PTVYNYIHIGN) is the 'HIGH' region element. Zn(2+) contacts are provided by cysteine 209, histidine 234, and glutamate 238. Positions 266-270 (KMSKS) match the 'KMSKS' region motif. Lysine 269 contacts ATP.

The protein belongs to the class-I aminoacyl-tRNA synthetase family. Monomer. Requires Zn(2+) as cofactor.

The protein resides in the cytoplasm. It carries out the reaction tRNA(Cys) + L-cysteine + ATP = L-cysteinyl-tRNA(Cys) + AMP + diphosphate. The protein is Cysteine--tRNA ligase of Listeria innocua serovar 6a (strain ATCC BAA-680 / CLIP 11262).